The sequence spans 614 residues: MPVYRSKTTTSGRNMAGARALWRATGMKDEDFQKPIIAVANSFTQFVPGHVHLKDLGQLVAREIEKAGGVAKEFNTIAVDDGIAMGHDGMLYSLPSRDIIADSVEYMVNAHCADALVCISNCDKITPGMLMAAMRLNIPVIFVSGGPMEAGKTRLAEHKLDLVDAIVIGTDKNASDEQVEAYERSACPTCGSCSGMFTANSMNCLTEALGLSLPGNGSLLATHADREQLFLEAGRRIVEITKRYYEQDDASVLPRAIATFEAFENAMALDIAMGGSTNTILHLLAAAQEGGVPFTMTDIDRLSRKVPQLCKVAPNTQKYHMEDVHRAGGVVGILAELNRGGLLHNQVPTVHSKTLQEGLDQWDIISTGSDAVATFYRAGPAGIPTQVAFSQATRWPTLDADRVEGCIRSVEHAYSKEGGLAVLRGNIALDGCVVKTSGVDESIWVFEGPAYVVESQDQAVKDILDGKVKAGDVVVIRYEGPRGGPGMQEMLYPTSYLKSQGLGKACALLTDGRFSGGTSGLSIGHVSPEAAAGGAIGLVETGDIIHIDIPNRSINVKLSNQELAERRDAMAAKGNKAWKPIEARPRKVSASLKAYAMLATSADKGAVRDLSKLD.

D81 is a binding site for Mg(2+). Residue C122 participates in [2Fe-2S] cluster binding. Positions 123 and 124 each coordinate Mg(2+). K124 carries the N6-carboxylysine modification. C193 contributes to the [2Fe-2S] cluster binding site. E489 lines the Mg(2+) pocket. S515 (proton acceptor) is an active-site residue.

It belongs to the IlvD/Edd family. As to quaternary structure, homodimer. [2Fe-2S] cluster is required as a cofactor. It depends on Mg(2+) as a cofactor.

The catalysed reaction is (2R)-2,3-dihydroxy-3-methylbutanoate = 3-methyl-2-oxobutanoate + H2O. It carries out the reaction (2R,3R)-2,3-dihydroxy-3-methylpentanoate = (S)-3-methyl-2-oxopentanoate + H2O. The protein operates within amino-acid biosynthesis; L-isoleucine biosynthesis; L-isoleucine from 2-oxobutanoate: step 3/4. Its pathway is amino-acid biosynthesis; L-valine biosynthesis; L-valine from pyruvate: step 3/4. In terms of biological role, functions in the biosynthesis of branched-chain amino acids. Catalyzes the dehydration of (2R,3R)-2,3-dihydroxy-3-methylpentanoate (2,3-dihydroxy-3-methylvalerate) into 2-oxo-3-methylpentanoate (2-oxo-3-methylvalerate) and of (2R)-2,3-dihydroxy-3-methylbutanoate (2,3-dihydroxyisovalerate) into 2-oxo-3-methylbutanoate (2-oxoisovalerate), the penultimate precursor to L-isoleucine and L-valine, respectively. The polypeptide is Dihydroxy-acid dehydratase (Cellvibrio japonicus (strain Ueda107) (Pseudomonas fluorescens subsp. cellulosa)).